We begin with the raw amino-acid sequence, 329 residues long: Ankyrin repeat and SOCS box protein 5 (329 aa).

ANK repeat units lie at residues 69-98, 102-131, 135-164, 167-196, 200-229, and 232-261; these read ADRSPLHEAASQGRLLALRTLLSQGYNVNA, DHVTPLHEACLGDHVACARTLLQAGANVNA, DGVTPLFNACSQGSTSCTELLLEYGAKPQL, CLPSPTHEAASKGHHECLEILISWGVDVDQ, HLGTPLYVACMSQQFHCVRKLLYAGADVQK, and YWDTPLHAAAQQSCTEIVNLLLEFGADINA. Residues 278 to 329 enclose the SOCS box domain; sequence LVERLLLQHEATPSSLCQLCRLCIRNYIGRPRLHLIPQLQLPTLLQNFLQYR.

It belongs to the ankyrin SOCS box (ASB) family.

It participates in protein modification; protein ubiquitination. Functionally, may be a substrate-recognition component of a SCF-like ECS (Elongin-Cullin-SOCS-box protein) E3 ubiquitin-protein ligase complex which mediates the ubiquitination and subsequent proteasomal degradation of target proteins. May play a role in the initiation of arteriogenesis. This Bos taurus (Bovine) protein is Ankyrin repeat and SOCS box protein 5 (ASB5).